Here is a 167-residue protein sequence, read N- to C-terminus: NADH-quinone oxidoreductase subunit I 1 (167 aa).

4Fe-4S ferredoxin-type domains are found at residues 52-82 and 98-127; these read LQRD…IEAA and KVYN…HGHG. Residues C62, C65, C68, C72, C107, C110, C113, and C117 each contribute to the [4Fe-4S] cluster site. A disordered region spans residues 148 to 167; it reads PVPPGAKPPSMADEVPAGAH.

This sequence belongs to the complex I 23 kDa subunit family. In terms of assembly, NDH-1 is composed of 14 different subunits. Subunits NuoA, H, J, K, L, M, N constitute the membrane sector of the complex. It depends on [4Fe-4S] cluster as a cofactor.

The protein resides in the cell inner membrane. The catalysed reaction is a quinone + NADH + 5 H(+)(in) = a quinol + NAD(+) + 4 H(+)(out). In terms of biological role, NDH-1 shuttles electrons from NADH, via FMN and iron-sulfur (Fe-S) centers, to quinones in the respiratory chain. The immediate electron acceptor for the enzyme in this species is believed to be ubiquinone. Couples the redox reaction to proton translocation (for every two electrons transferred, four hydrogen ions are translocated across the cytoplasmic membrane), and thus conserves the redox energy in a proton gradient. The chain is NADH-quinone oxidoreductase subunit I 1 from Solibacter usitatus (strain Ellin6076).